The primary structure comprises 418 residues: Tyrosine--tRNA ligase 1 (418 aa).

Tyr-34 is an L-tyrosine binding site. The 'HIGH' region motif lies at 39-48 (PTADSLHIGH). Residues Tyr-169 and Gln-173 each contribute to the L-tyrosine site. The short motif at 230 to 234 (KFGKT) is the 'KMSKS' region element. Residue Lys-233 coordinates ATP. Residues 352–418 (TVLIDLLVES…GKKKYFLIRY (67 aa)) enclose the S4 RNA-binding domain.

The protein belongs to the class-I aminoacyl-tRNA synthetase family. TyrS type 1 subfamily. As to quaternary structure, homodimer.

Its subcellular location is the cytoplasm. The enzyme catalyses tRNA(Tyr) + L-tyrosine + ATP = L-tyrosyl-tRNA(Tyr) + AMP + diphosphate + H(+). Its function is as follows. Catalyzes the attachment of tyrosine to tRNA(Tyr) in a two-step reaction: tyrosine is first activated by ATP to form Tyr-AMP and then transferred to the acceptor end of tRNA(Tyr). The sequence is that of Tyrosine--tRNA ligase 1 from Bacillus cereus (strain ATCC 10987 / NRS 248).